We begin with the raw amino-acid sequence, 243 residues long: Derlin-1.1 (243 aa).

The Cytoplasmic segment spans residues 1–20 (MSSPAEYYKSLPPISKAYGT). A helical membrane pass occupies residues 21–41 (LCFFTTVLVQLQILHPLFLYL). Residues 42–55 (DYPLVFKKFEIWRL) are Lumenal-facing. A helical membrane pass occupies residues 56-76 (LTSFFFLAPFSMKFGIRLLMI). The Cytoplasmic portion of the chain corresponds to 77 to 94 (ARYGVMLEKGAFDKRTAD). A helical transmembrane segment spans residues 95 to 115 (FLWMMIFGAISLLVLSIIPLF). The Lumenal portion of the chain corresponds to 116–157 (NSFFLGIPMVSMLLYVWSRENPNAQINIYGLVQLRSFYLPWA). Residues 158 to 178 (MLLLDVIFGSSLMPGLLGIMV) traverse the membrane as a helical segment. The Cytoplasmic portion of the chain corresponds to 179 to 243 (GHLYYFFAVL…FRGRSYRLNQ (65 aa)). Residues 219–243 (SPVRPPANGNSGSGVFRGRSYRLNQ) form a disordered region.

This sequence belongs to the derlin family. In terms of tissue distribution, expressed in roots, stalks, leaves, immature ears, embryo and endosperm.

The protein localises to the endoplasmic reticulum membrane. Its function is as follows. May be involved in the degradation process of specific misfolded endoplasmic reticulum (ER) luminal proteins. The sequence is that of Derlin-1.1 (DER1.1) from Zea mays (Maize).